Reading from the N-terminus, the 269-residue chain is MEVFRIYTNSPLRNFTYILRNSETSETLSIDPYDSEQIEKFLDSKGWTLDFLLNTHEHEDHTSGNTGLVQRYGCTVYSHPEGIGKIPHATHPLKKGDFLLRSSKEYLEILDTPGHTFCHVCLLLVENQKPKAIFTGDTIFNAGVGNCHHGGDPEVLAKTILEQFYPLEEEILLYPGHDYLETNLKFTLSLDPSNQDAIRTLEECSRLSKNVEFLTTDLRKERKINTFFQCDKPSLELRKNVSKKIPFKQLLDNDPTSFFISLRSLRDQW.

Zn(2+) is bound by residues His-56, His-58, Asp-60, His-61, His-115, Asp-137, and His-177.

Belongs to the metallo-beta-lactamase superfamily. Glyoxalase II family. In terms of assembly, monomer. The cofactor is Zn(2+).

It catalyses the reaction an S-(2-hydroxyacyl)glutathione + H2O = a 2-hydroxy carboxylate + glutathione + H(+). It participates in secondary metabolite metabolism; methylglyoxal degradation; (R)-lactate from methylglyoxal: step 2/2. In terms of biological role, thiolesterase that catalyzes the hydrolysis of S-D-lactoyl-glutathione to form glutathione and D-lactic acid. The protein is Hydroxyacylglutathione hydrolase of Leptospira borgpetersenii serovar Hardjo-bovis (strain JB197).